The primary structure comprises 199 residues: 7-methyl-GTP pyrophosphatase (199 aa).

Catalysis depends on D76, which acts as the Proton acceptor.

It belongs to the Maf family. YceF subfamily. Requires a divalent metal cation as cofactor.

The protein localises to the cytoplasm. It carries out the reaction N(7)-methyl-GTP + H2O = N(7)-methyl-GMP + diphosphate + H(+). Nucleoside triphosphate pyrophosphatase that hydrolyzes 7-methyl-GTP (m(7)GTP). May have a dual role in cell division arrest and in preventing the incorporation of modified nucleotides into cellular nucleic acids. In Rhizobium johnstonii (strain DSM 114642 / LMG 32736 / 3841) (Rhizobium leguminosarum bv. viciae), this protein is 7-methyl-GTP pyrophosphatase.